The chain runs to 3413 residues: Protein pecanex (3413 aa).

The next 2 helical transmembrane spans lie at Val-33–Phe-53 and Trp-57–Ala-77. Asn-164 is a glycosylation site (N-linked (GlcNAc...) asparagine). Low complexity predominate over residues Gly-182 to Ser-195. Disordered regions lie at residues Gly-182 to Ala-213 and Gly-235 to Leu-314. Positions Val-196–Ala-213 are enriched in polar residues. Asn-208 carries N-linked (GlcNAc...) asparagine glycosylation. Positions Ala-302 to Asn-312 are enriched in low complexity. N-linked (GlcNAc...) asparagine glycosylation occurs at Asn-317. Disordered stretches follow at residues Pro-327–Pro-363, Leu-379–His-403, Pro-540–Gly-609, and Pro-625–Pro-651. Over residues Leu-330–Ser-354 the composition is skewed to polar residues. Residues Arg-392–Lys-402 show a composition bias toward basic and acidic residues. Residues Gly-541–Ala-559 are compositionally biased toward gly residues. Residues Asn-569 and Asn-581 are each glycosylated (N-linked (GlcNAc...) asparagine). A compositionally biased stretch (polar residues) spans Asn-569–Lys-582. Gly residues predominate over residues Gly-599–Gly-609. The segment covering Pro-625 to Pro-634 has biased composition (polar residues). A glycan (N-linked (GlcNAc...) asparagine) is linked at Asn-685. The span at Glu-720 to Asp-730 shows a compositional bias: basic and acidic residues. Disordered regions lie at residues Glu-720–Val-745, His-816–Pro-873, Arg-886–Gln-921, and Lys-1002–Ser-1021. A compositionally biased stretch (basic residues) spans His-816–Ala-826. Positions Ser-828–Gly-846 are enriched in low complexity. Residues Asn-847–Asp-856 show a composition bias toward acidic residues. Asn-857 carries N-linked (GlcNAc...) asparagine glycosylation. Residues Ser-1008–Ser-1021 are compositionally biased toward low complexity. 4 N-linked (GlcNAc...) asparagine glycosylation sites follow: Asn-1010, Asn-1015, Asn-1069, and Asn-1199. 2 helical membrane passes run Met-1315–Leu-1335 and Leu-1343–Val-1363. Asn-1375 carries N-linked (GlcNAc...) asparagine glycosylation. The next 4 membrane-spanning stretches (helical) occupy residues Lys-1376–Leu-1396, Val-1423–Ser-1443, Leu-1474–Pro-1494, and Gly-1504–Leu-1524. The N-linked (GlcNAc...) asparagine glycan is linked to Asn-1572. 3 disordered regions span residues Gln-1577 to Pro-1675, Asp-1722 to Thr-1744, and Ala-1760 to Pro-1813. Composition is skewed to basic and acidic residues over residues Arg-1587 to Ile-1598 and Thr-1607 to Asp-1620. Residues Lys-1639–Ser-1666 show a composition bias toward low complexity. The span at Ser-1725 to Leu-1738 shows a compositional bias: polar residues. 5 consecutive repeat copies span residues Gly-1776–Thr-1777, Gly-1778–Thr-1779, Gly-1780–Thr-1781, Gly-1782–Thr-1783, and Gly-1784–Thr-1785. A 5 X 2 AA tandem repeats of G-T region spans residues Gly-1776 to Thr-1785. Asn-1791 and Asn-1804 each carry an N-linked (GlcNAc...) asparagine glycan. Residues Gly-1799 to Asn-1808 are compositionally biased toward low complexity. Transmembrane regions (helical) follow at residues Leu-1830–Thr-1850, Leu-1856–Pro-1876, Leu-1914–Ser-1934, Gln-1940–Leu-1960, and Ile-1976–Ile-1996. A disordered region spans residues Ser-2344 to Thr-2463. The segment covering Gly-2346–Ala-2370 has biased composition (low complexity). 2 N-linked (GlcNAc...) asparagine glycosylation sites follow: Asn-2380 and Asn-2387. Residues Ser-2389–Arg-2411 are compositionally biased toward low complexity. The segment covering Gly-2437–Asp-2447 has biased composition (gly residues). The span at Gln-2449–Thr-2463 shows a compositional bias: polar residues. Asn-2458, Asn-2619, and Asn-2717 each carry an N-linked (GlcNAc...) asparagine glycan. Disordered stretches follow at residues Leu-2908 to Ser-2997 and Glu-3198 to Gly-3242. A compositionally biased stretch (basic and acidic residues) spans Arg-2940 to Ala-2956. Asn-3246 carries an N-linked (GlcNAc...) asparagine glycan. The tract at residues Ala-3295–Val-3413 is disordered. The span at Glu-3310–Glu-3323 shows a compositional bias: acidic residues. Residues Thr-3364–Ser-3377 are compositionally biased toward low complexity. Acidic residues predominate over residues Gln-3380–Glu-3406.

The protein belongs to the pecanex family.

Its subcellular location is the membrane. Involved in neurogenesis. In Drosophila melanogaster (Fruit fly), this protein is Protein pecanex (pcx).